The sequence spans 344 residues: 4'-phosphopantetheinyl transferase NpgA (344 aa).

The protein belongs to the P-Pant transferase superfamily.

The catalysed reaction is apo-[ACP] + CoA = holo-[ACP] + adenosine 3',5'-bisphosphate + H(+). Functionally, transfers the 4'-phosphopantetheine moiety from coenzyme A to a Ser of an acyl-carrier-protein. The enzyme is able to transfer the cofactor to a broad range of enzymes with acyl- or peptidyl-carrier protein domains. Required for primary biological processes such as growth and asexual/sexual development, and activates target enzymes involved in the synthesis of metabolites such as fatty acids, polyketides and nonribosomal peptides, lysine, siderophore, penicillin, sterigmatocystin, shamixantone, dehydroaustinol, and pigments. The sequence is that of 4'-phosphopantetheinyl transferase NpgA (npgA) from Emericella nidulans (strain FGSC A4 / ATCC 38163 / CBS 112.46 / NRRL 194 / M139) (Aspergillus nidulans).